A 305-amino-acid chain; its full sequence is MTFPDIVPELKSRMPDLRGRLLANESLAPLTWFRVGGPAQALFTPADEDDLAYFLSHLPEEIPVCCIGVGSNLIVRDRGLPGVVIRLPPRGFGEITIDGDAVHAGAAALDKRVAEAAAAASISGLEFYFGIPGTIGGALRMNAGANGSETRDVLVEARALSRRGERMTFDNFAMAFDYRSSGIDPSVIFTGAMFRGRIAEPQAIRARMNEVQAHRETVQPIREKTGGSTFKNPPGQSAWKLIDAAGMRGHRVGGAQVSDMHCNFLINTGEATARDIETLGESVRERVKRHSGVDLQWEIKRIGLG.

Residues 35–214 (VGGPAQALFT…RARMNEVQAH (180 aa)) form the FAD-binding PCMH-type domain. Arginine 179 is a catalytic residue. Catalysis depends on serine 228, which acts as the Proton donor. The active site involves glutamate 298.

It belongs to the MurB family. FAD serves as cofactor.

The protein localises to the cytoplasm. The catalysed reaction is UDP-N-acetyl-alpha-D-muramate + NADP(+) = UDP-N-acetyl-3-O-(1-carboxyvinyl)-alpha-D-glucosamine + NADPH + H(+). The protein operates within cell wall biogenesis; peptidoglycan biosynthesis. Its function is as follows. Cell wall formation. The protein is UDP-N-acetylenolpyruvoylglucosamine reductase of Nitrobacter winogradskyi (strain ATCC 25391 / DSM 10237 / CIP 104748 / NCIMB 11846 / Nb-255).